A 319-amino-acid chain; its full sequence is UDP-3-O-acylglucosamine N-acyltransferase (319 aa).

His230 acts as the Proton acceptor in catalysis.

The protein belongs to the transferase hexapeptide repeat family. LpxD subfamily. As to quaternary structure, homotrimer.

The catalysed reaction is a UDP-3-O-[(3R)-3-hydroxyacyl]-alpha-D-glucosamine + a (3R)-hydroxyacyl-[ACP] = a UDP-2-N,3-O-bis[(3R)-3-hydroxyacyl]-alpha-D-glucosamine + holo-[ACP] + H(+). Its pathway is bacterial outer membrane biogenesis; LPS lipid A biosynthesis. In terms of biological role, catalyzes the N-acylation of UDP-3-O-acylglucosamine using 3-hydroxyacyl-ACP as the acyl donor. Is involved in the biosynthesis of lipid A, a phosphorylated glycolipid that anchors the lipopolysaccharide to the outer membrane of the cell. This Campylobacter lari (strain RM2100 / D67 / ATCC BAA-1060) protein is UDP-3-O-acylglucosamine N-acyltransferase.